The primary structure comprises 337 residues: Ribonucleoside-diphosphate reductase small subunit (337 aa).

The disordered stretch occupies residues 1–22; sequence MDPAVSPASTDPLDTHASGAGA. Positions 91, 121, and 124 each coordinate Fe cation. Residue Tyr128 is part of the active site. Residues 177-197 traverse the membrane as a helical segment; it reads FILMILIEGVFFAASFAAIAY. Fe cation is bound by residues Glu184, Glu218, and His221.

It belongs to the ribonucleoside diphosphate reductase small chain family. In terms of assembly, heterotetramer composed of a homodimer of the large subunit (R1) and a homodimer of the small subunit (R2). Larger multisubunit protein complex are also active, composed of (R1)n(R2)n. Fe cation serves as cofactor.

It localises to the host membrane. The catalysed reaction is a 2'-deoxyribonucleoside 5'-diphosphate + [thioredoxin]-disulfide + H2O = a ribonucleoside 5'-diphosphate + [thioredoxin]-dithiol. Functionally, ribonucleoside-diphosphate reductase holoenzyme provides the precursors necessary for viral DNA synthesis. Allows virus growth in non-dividing cells, as well as reactivation from latency in infected hosts. Catalyzes the biosynthesis of deoxyribonucleotides from the corresponding ribonucleotides. This Human herpesvirus 2 (strain 333) (HHV-2) protein is Ribonucleoside-diphosphate reductase small subunit.